The primary structure comprises 762 residues: Acyl-homoserine lactone acylase PvdQ (762 aa).

Positions 1–23 (MGMRTVLTGLAGMLLGSMMPVQA) are cleaved as a signal peptide. The propeptide at 194–216 (ALSGEQAFQVAEQRRQRFRLERG) is spacer peptide. S217 serves as the catalytic Nucleophile.

It belongs to the peptidase S45 family. Heterodimer of an alpha subunit and a beta subunit processed from the same precursor.

Its subcellular location is the periplasm. It catalyses the reaction an N-acyl-L-homoserine lactone + H2O = L-homoserine lactone + a carboxylate. Catalyzes the deacylation of acyl-homoserine lactone (AHL or acyl-HSL), releasing homoserine lactone (HSL) and the corresponding fatty acid. Possesses a specificity for the degradation of long-chain acyl-HSLs (side chains of 11 to 14 carbons in length). Degrades 3-oxo-C12-HSL, one of the two main AHL signal molecules of P.aeruginosa, and thereby functions as a quorum quencher, inhibiting the las quorum-sensing system. Therefore, may enable P.aeruginosa to modulate its own quorum-sensing-dependent pathogenic potential. Also appears to be required for pyoverdin biosynthesis. The chain is Acyl-homoserine lactone acylase PvdQ (pvdQ) from Pseudomonas aeruginosa (strain ATCC 15692 / DSM 22644 / CIP 104116 / JCM 14847 / LMG 12228 / 1C / PRS 101 / PAO1).